The following is a 596-amino-acid chain: Succinate dehydrogenase flavoprotein subunit (596 aa).

FAD is bound by residues 18–23 (GAGGAG), 41–56 (TKLF…AQGG), and aspartate 225. Histidine 49 is subject to Tele-8alpha-FAD histidine. Residues histidine 246 and threonine 258 each coordinate substrate. The active-site Proton acceptor is the arginine 290. Histidine 357 contacts substrate. FAD is bound at residue glutamate 391. A substrate-binding site is contributed by arginine 402. 407–408 (SL) serves as a coordination point for FAD.

Belongs to the FAD-dependent oxidoreductase 2 family. FRD/SDH subfamily. Part of an enzyme complex containing four subunits: a flavoprotein, an iron-sulfur, cytochrome b-556, and a hydrophobic anchor protein. Requires FAD as cofactor.

Its subcellular location is the cell inner membrane. It carries out the reaction a quinone + succinate = fumarate + a quinol. The protein operates within carbohydrate metabolism; tricarboxylic acid cycle; fumarate from succinate (bacterial route): step 1/1. The sequence is that of Succinate dehydrogenase flavoprotein subunit (sdhA) from Rickettsia felis (strain ATCC VR-1525 / URRWXCal2) (Rickettsia azadi).